The following is a 480-amino-acid chain: RNA-splicing ligase RtcB homolog (480 aa).

Asp93, Cys96, His202, His234, and His328 together coordinate Mn(2+). 201-205 (NHYTE) provides a ligand contact to GMP. Residues 328-329 (HN), 377-380 (GGTM), Ser384, 403-406 (HGAG), and Lys479 each bind GMP. The GMP-histidine intermediate role is filled by His403.

It belongs to the RtcB family. Catalytic component of the tRNA-splicing ligase complex. Requires Mn(2+) as cofactor.

The catalysed reaction is a 3'-end 3'-phospho-ribonucleotide-RNA + a 5'-end dephospho-ribonucleoside-RNA + GTP = a ribonucleotidyl-ribonucleotide-RNA + GMP + diphosphate. The enzyme catalyses a 3'-end 2',3'-cyclophospho-ribonucleotide-RNA + a 5'-end dephospho-ribonucleoside-RNA + GTP + H2O = a ribonucleotidyl-ribonucleotide-RNA + GMP + diphosphate + H(+). Functionally, catalytic subunit of the tRNA-splicing ligase complex that acts by directly joining spliced tRNA halves to mature-sized tRNAs by incorporating the precursor-derived splice junction phosphate into the mature tRNA as a canonical 3',5'-phosphodiester. May act as an RNA ligase with broad substrate specificity, and may function toward other RNAs. The protein is RNA-splicing ligase RtcB homolog of Thalassiosira pseudonana (Marine diatom).